The sequence spans 530 residues: Lanosterol 14-alpha demethylase CYP51 (530 aa).

Residues 1 to 20 (MSATKSIVGEALEYVNIGLS) are Lumenal-facing. The chain crosses the membrane as a helical span at residues 21–41 (HFLALPLAQRISLIIIIPFIY). The Cytoplasmic segment spans residues 42-530 (NIVWQLLYSL…WEKRNPEQKI (489 aa)). A Glycyl lysine isopeptide (Lys-Gly) (interchain with G-Cter in ubiquitin) cross-link involves residue lysine 116. Tyrosine 126 is a binding site for lanosterol. Glycine 314 contributes to the itraconazole binding site. Glycyl lysine isopeptide (Lys-Gly) (interchain with G-Cter in ubiquitin) cross-links involve residues lysine 353 and lysine 454. Serine 458 carries the post-translational modification Phosphoserine. A heme-binding site is contributed by cysteine 470.

This sequence belongs to the cytochrome P450 family. As to quaternary structure, interacts with ERG28. It depends on heme as a cofactor.

The protein localises to the endoplasmic reticulum membrane. It catalyses the reaction a 14alpha-methyl steroid + 3 reduced [NADPH--hemoprotein reductase] + 3 O2 = a Delta(14) steroid + formate + 3 oxidized [NADPH--hemoprotein reductase] + 4 H2O + 4 H(+). The enzyme catalyses a 14alpha-methyl steroid + reduced [NADPH--hemoprotein reductase] + O2 = a 14alpha-hydroxymethyl steroid + oxidized [NADPH--hemoprotein reductase] + H2O + H(+). The catalysed reaction is a 14alpha-hydroxymethyl steroid + reduced [NADPH--hemoprotein reductase] + O2 = a 14alpha-formyl steroid + oxidized [NADPH--hemoprotein reductase] + 2 H2O + H(+). It carries out the reaction a 14alpha-formyl steroid + reduced [NADPH--hemoprotein reductase] + O2 = a Delta(14) steroid + formate + oxidized [NADPH--hemoprotein reductase] + H2O + 2 H(+). It catalyses the reaction lanosterol + 3 reduced [NADPH--hemoprotein reductase] + 3 O2 = 4,4-dimethyl-5alpha-cholesta-8,14,24-trien-3beta-ol + formate + 3 oxidized [NADPH--hemoprotein reductase] + 4 H2O + 4 H(+). The enzyme catalyses lanosterol + reduced [NADPH--hemoprotein reductase] + O2 = 32-hydroxylanosterol + oxidized [NADPH--hemoprotein reductase] + H2O + H(+). The catalysed reaction is 32-hydroxylanosterol + reduced [NADPH--hemoprotein reductase] + O2 = 32-oxolanosterol + oxidized [NADPH--hemoprotein reductase] + 2 H2O + H(+). It carries out the reaction 32-oxolanosterol + reduced [NADPH--hemoprotein reductase] + O2 = 4,4-dimethyl-5alpha-cholesta-8,14,24-trien-3beta-ol + formate + oxidized [NADPH--hemoprotein reductase] + H2O + 2 H(+). Its pathway is steroid biosynthesis; zymosterol biosynthesis; zymosterol from lanosterol: step 1/6. Its function is as follows. Sterol 14alpha-demethylase that plays a critical role in the third module of ergosterol biosynthesis pathway, being ergosterol the major sterol component in fungal membranes that participates in a variety of functions. The third module or late pathway involves the ergosterol synthesis itself through consecutive reactions that mainly occur in the endoplasmic reticulum (ER) membrane. Starting from lanosterol (lanosta-8,24-dien-3beta-ol), it catalyzes the three-step oxidative removal of the 14alpha-methyl group (C-32) of the sterol in the form of formate, and converts the sterol to 4,4-dimethyl-5alpha-cholesta-8,14,24-trien-3beta-ol, which is critical for ergosterol biosynthesis. Can demethylate substrates not intrinsic to yeast, such as eburicol (24-methylene-24,25-dihydrolanosterol) at a similar rate to lanosterol, and at a lower rate the 24,25-dihydrolanosterol (DHL) to 4,4-dimethyl-8,14-cholestadien-3beta-ol. The sequence is that of Lanosterol 14-alpha demethylase CYP51 from Saccharomyces cerevisiae (strain ATCC 204508 / S288c) (Baker's yeast).